Reading from the N-terminus, the 207-residue chain is Large ribosomal subunit protein uL4 (207 aa).

The segment at 50–75 (KTKTVSEVSGTTKKPFKQKGTGNARQ) is disordered.

It belongs to the universal ribosomal protein uL4 family. As to quaternary structure, part of the 50S ribosomal subunit.

In terms of biological role, one of the primary rRNA binding proteins, this protein initially binds near the 5'-end of the 23S rRNA. It is important during the early stages of 50S assembly. It makes multiple contacts with different domains of the 23S rRNA in the assembled 50S subunit and ribosome. Its function is as follows. Forms part of the polypeptide exit tunnel. The protein is Large ribosomal subunit protein uL4 of Rickettsia akari (strain Hartford).